Reading from the N-terminus, the 177-residue chain is Thaumatin-like protein (177 aa).

The first 26 residues, 1-26 (MASPATSSAVLVVVLVATLAAGGANA), serve as a signal peptide directing secretion.

It belongs to the thaumatin family.

The protein localises to the secreted. The sequence is that of Thaumatin-like protein from Oryza sativa subsp. japonica (Rice).